The following is a 197-amino-acid chain: MAIKDLFNNFFLMDDEEEVESPEERQRRVVQNEENETNNVQQNQPQQSERSYSNQSKLKTVPQKKTTRNYNSEERNVRMNQPPSKSNGKNVVTMNQTSQSYSGYESSKMCLFEPRVFSDTQDIADELKNRRATLVNLQRIDKISAKRIIDFLSGTVYAIGGDIQRVGTDIFLCTPDNVEVAGSITDHIEQMESQHYE.

The segment at 15–91 (DEEEVESPEE…PPSKSNGKNV (77 aa)) is disordered. A compositionally biased stretch (basic and acidic residues) spans 22 to 31 (PEERQRRVVQ). The span at 37–47 (TNNVQQNQPQQ) shows a compositional bias: low complexity. 2 stretches are compositionally biased toward polar residues: residues 48 to 58 (SERSYSNQSKL) and 78 to 91 (RMNQ…GKNV).

It belongs to the SepF family. As to quaternary structure, homodimer. Interacts with FtsZ.

The protein resides in the cytoplasm. Its function is as follows. Cell division protein that is part of the divisome complex and is recruited early to the Z-ring. Probably stimulates Z-ring formation, perhaps through the cross-linking of FtsZ protofilaments. Its function overlaps with FtsA. The chain is Cell division protein SepF from Staphylococcus haemolyticus (strain JCSC1435).